Here is a 253-residue protein sequence, read N- to C-terminus: Phycoerythrobilin:ferredoxin oxidoreductase (253 aa).

The protein belongs to the HY2 family.

It carries out the reaction (3Z)-phycoerythrobilin + oxidized 2[4Fe-4S]-[ferredoxin] = 15,16-dihydrobiliverdin + reduced 2[4Fe-4S]-[ferredoxin] + 2 H(+). Its function is as follows. Catalyzes the two-electron reduction of the C2 and C3(1) diene system of 15,16-dihydrobiliverdin. The protein is Phycoerythrobilin:ferredoxin oxidoreductase of Prochlorococcus marinus (strain AS9601).